The sequence spans 95 residues: Protein TusB (95 aa).

Belongs to the DsrH/TusB family. As to quaternary structure, heterohexamer, formed by a dimer of trimers. The hexameric TusBCD complex contains 2 copies each of TusB, TusC and TusD. The TusBCD complex interacts with TusE.

The protein resides in the cytoplasm. Its function is as follows. Part of a sulfur-relay system required for 2-thiolation of 5-methylaminomethyl-2-thiouridine (mnm(5)s(2)U) at tRNA wobble positions. The sequence is that of Protein TusB from Buchnera aphidicola subsp. Acyrthosiphon pisum (strain 5A).